The following is a 109-amino-acid chain: Nucleoid-associated protein Spea_1509 (109 aa).

The tract at residues 87 to 109 (NQKEKMAEVTGGMQLPPGMKMPF) is disordered.

This sequence belongs to the YbaB/EbfC family. As to quaternary structure, homodimer.

Its subcellular location is the cytoplasm. The protein localises to the nucleoid. In terms of biological role, binds to DNA and alters its conformation. May be involved in regulation of gene expression, nucleoid organization and DNA protection. The sequence is that of Nucleoid-associated protein Spea_1509 from Shewanella pealeana (strain ATCC 700345 / ANG-SQ1).